We begin with the raw amino-acid sequence, 1292 residues long: MADPAAPTPAAPAPAQAPAPAPEAVPAPAAAPVPAPAPASDSASGPSSDSGPEAGSQRLLFSHDLVSGRYRGSVHFGLVRLIHGEDSDSEGEEEGRGSSGCSEAGGAGHEEGRASPLRRGYVRVQWYPEGVKQHVKETKLKLEDRSVVPRDVVRHMRSTDSQCGTVIDVNIDCAVKLIGTNCIIYPVNSKDLQHIWPFMYGDYIAYDCWLGKVYDLKNQIILKLSNGARCSMNTEDGAKLYDVCPHVSDSGLFFDDSYGFYPGQVLIGPAKIFSSVQWLSGVKPVLSTKSKFRVVVEEVQVVELKVTWITKSFCPGGTDSVSPPPSVITQENLGRVKRLGCFDHAQRQLGERCLYVFPAKVEPAKIAWECPEKNCAQGEGSMAKKVKRLLKKQVVRIMSCSPDTQCSRDHSMEDPDKKGESKTKSEAESASPEETPDGSASPVEMQDEGAEEPHEAGEQLPPFLLKEGRDDRLHSAEQDADDEAADDTDDTSSVTSSASSTTSSQSGSGTSRKKSIPLSIKNLKRKHKRKKNKITRDFKPGDRVAVEVVTTMTSADVMWQDGSVECNIRSNDLFPVHHLDNNEFCPGDFVVDKRVQSCPDPAVYGVVQSGDHIGRTCMVKWFKLRPSGDDVELIGEEEDVSVYDIADHPDFRFRTTDIVIRIGNTEDGAPHKEDEPSVGQVARVDVSSKVEVVWADNSKTIILPQHLYNIESEIEESDYDSVEGSTSGASSDEWEDDSDSWETDNGLVEDEHPKIEEPPIPPLEQPVAPEDKGVVISEEAATAAVQGAVAMAAPMAGLMEKAGKDGPPKSFRELKEAIKILESLKNMTVEQLLTGSPTSPTVEPEKPTREKKFLDDIKKLQENLKKTLDNVAIVEEEKMEAVPDVERKEDKPEGQSPVKAEWPSETPVLCQQCGGKPGVTFTSAKGEVFSVLEFAPSNHSFKKIEFQPPEAKKFFSTVRKEMALLATSLPEGIMVKTFEDRMDLFSALIKGPTRTPYEDGLYLFDIQLPNIYPAVPPHFCYLSQCSGRLNPNLYDNGKVCVSLLGTWIGKGTERWTSKSSLLQVLISIQGLILVNEPYYNEAGFDSDRGLQEGYENSRCYNEMALIRVVQSMTQLVRRPPEVFEQEIRQHFSTGGWRLVNRIESWLETHALLEKAQALPNGVPKASSSPEPPAVAELSDSGQQEPEDGGPAPGEASQGSDSEGGAQGLASASRDHTDQTSETAPDASVPPSVKPKKRRKSYRSFLPEKSGYPDIGFPLFPLSKGFIKSIRGVLTQFRAALLEAGMPECTEDK.

Residues 1–37 (MADPAAPTPAAPAPAQAPAPAPEAVPAPAAAPVPAPA) are compositionally biased toward pro residues. Disordered stretches follow at residues 1–56 (MADP…EAGS) and 85–114 (EDSDSEGEEEGRGSSGCSEAGGAGHEEGRA). Residues 38 to 56 (PASDSASGPSSDSGPEAGS) show a composition bias toward low complexity. Phosphoserine occurs at positions 50, 87, 89, 399, and 401. 3 disordered regions span residues 401–459 (SPDT…AGEQ), 472–519 (RLHS…IPLS), and 714–746 (IEESDYDSVEGSTSGASSDEWEDDSDSWETDNG). Positions 406-427 (CSRDHSMEDPDKKGESKTKSEA) are enriched in basic and acidic residues. Serine 441 is subject to Phosphoserine. The segment covering 478–490 (QDADDEAADDTDD) has biased composition (acidic residues). Phosphothreonine occurs at positions 488 and 491. Low complexity predominate over residues 491-510 (TSSVTSSASSTTSSQSGSGT). Residues 512-536 (RKKSIPLSIKNLKRKHKRKKNKITR) carry the Nuclear localization signal motif. Serine 515 bears the Phosphoserine mark. Acidic residues predominate over residues 732–742 (DEWEDDSDSWE). Positions 812–882 (RELKEAIKIL…IVEEEKMEAV (71 aa)) form a coiled coil. A Phosphoserine modification is found at serine 836. At threonine 838 the chain carries Phosphothreonine. A Phosphoserine modification is found at serine 839. A compositionally biased stretch (basic and acidic residues) spans 882–893 (VPDVERKEDKPE). The segment at 882-903 (VPDVERKEDKPEGQSPVKAEWP) is disordered. Serine 896 carries the post-translational modification Phosphoserine. Positions 953-1113 (KFFSTVRKEM…ALIRVVQSMT (161 aa)) constitute a UBC core domain. The active-site Glycyl thioester intermediate is the cysteine 1040. Residues 1160–1248 (NGVPKASSSP…KSYRSFLPEK (89 aa)) form a disordered region.

Belongs to the ubiquitin-conjugating enzyme family. As to quaternary structure, interacts with CPNE1 (via VWFA domain) and CPNE4 (via VWFA domain). Interacts with UBR2. In terms of processing, phosphorylated. Phosphorylation affects subcellular location. Ubiquitinated: autoubiquitinates, possibly affecting its subcellular location. In terms of tissue distribution, predominantly expressed in skeletal muscle and heart.

It is found in the cytoplasm. Its subcellular location is the nucleus. The enzyme catalyses S-ubiquitinyl-[E1 ubiquitin-activating enzyme]-L-cysteine + [acceptor protein]-L-lysine = [E1 ubiquitin-activating enzyme]-L-cysteine + N(6)-monoubiquitinyl-[acceptor protein]-L-lysine.. Its pathway is protein modification; protein ubiquitination. With respect to regulation, inhibited by phenylarsine oxide (PAO). E2/E3 hybrid ubiquitin-protein ligase that displays both E2 and E3 ligase activities and mediates monoubiquitination of target proteins. Negatively regulates TRAF6-mediated NF-kappa-B activation independently of its E2 activity. Acts as a positive regulator of BMP7 signaling by mediating monoubiquitination of SMAD6, thereby regulating adipogenesis. Mediates monoubiquitination at different sites of the nuclear localization signal (NLS) of BAP1, leading to cytoplasmic retention of BAP1. Also able to monoubiquitinate the NLS of other chromatin-associated proteins, such as INO80 and CXXC1, affecting their subcellular location. Acts as a regulator of retrograde transport by assisting the TRIM27:MAGEL2 E3 ubiquitin ligase complex to mediate 'Lys-63'-linked ubiquitination of WASHC1, leading to promote endosomal F-actin assembly. The polypeptide is (E3-independent) E2 ubiquitin-conjugating enzyme (UBE2O) (Homo sapiens (Human)).